We begin with the raw amino-acid sequence, 216 residues long: Somatotropin (216 aa).

Positions 1-26 are cleaved as a signal peptide; it reads MAASPRNSVLLAFALLCLPWPQEVGA. Histidine 45 contacts Zn(2+). Cysteine 78 and cysteine 189 are joined by a disulfide. Phosphoserine is present on serine 131. Glutamate 198 contributes to the Zn(2+) binding site. Cysteine 206 and cysteine 214 are oxidised to a cystine.

Belongs to the somatotropin/prolactin family.

Its subcellular location is the secreted. Its function is as follows. Plays an important role in growth control. Its major role in stimulating body growth is to stimulate the liver and other tissues to secrete IGF1. It stimulates both the differentiation and proliferation of myoblasts. It also stimulates amino acid uptake and protein synthesis in muscle and other tissues. The protein is Somatotropin (GH1) of Canis lupus familiaris (Dog).